The following is a 142-amino-acid chain: MTIERTFSIVKPNAVAKNAIGSIYARFESAGFTLVAAKMLRLSREQAEGFYAEHKGKPFFDGLVEFMMSGPIMVQVLEGENAVQRNRDIMGATNPANALAGTLRADYADSFTANAVHGSDSIESAQREIAYFFSDDEICPRA.

ATP contacts are provided by lysine 11, phenylalanine 59, arginine 87, threonine 93, arginine 104, and asparagine 114. The active-site Pros-phosphohistidine intermediate is histidine 117.

Belongs to the NDK family. In terms of assembly, homotetramer. Mg(2+) is required as a cofactor.

The protein resides in the cytoplasm. The enzyme catalyses a 2'-deoxyribonucleoside 5'-diphosphate + ATP = a 2'-deoxyribonucleoside 5'-triphosphate + ADP. The catalysed reaction is a ribonucleoside 5'-diphosphate + ATP = a ribonucleoside 5'-triphosphate + ADP. In terms of biological role, major role in the synthesis of nucleoside triphosphates other than ATP. The ATP gamma phosphate is transferred to the NDP beta phosphate via a ping-pong mechanism, using a phosphorylated active-site intermediate. This is Nucleoside diphosphate kinase from Pectobacterium carotovorum subsp. carotovorum (strain PC1).